The sequence spans 876 residues: MAMLKSLSSILFTSFALLFFLVHAQDQSGFISIDCGIPDDSSYNDETTGIKYVSDSAFVDSGTTKRIAAQFQSSGFDRHLLNVRSFPQSKRSCYDVPTPRGKGFKYLIRTRFMYGNYDDLGRVPEFDLYLGVNFWDSVKLDDATTILNKEIITIPLLDNVQVCVVDKNAGTPFLSVLEIRLLLNTTYETPYDALTLLRRLDYSKTGKLPSRYKDDIYDRIWTPRIVSSEYKILNTSLTVDQFLNNGYQPASTVMSTAETARNESLYLTLSFRPPDPNAKFYVYMHFAEIEVLKSNQTREFSIWLNEDVISPSFKLRYLLTDTFVTPDPVSGITINFSLLQPPGEFVLPPIINALEVYQVNEFLQIPTHPQDVDAMRKIKATYRVKKNWQGDPCVPVDYSWEGIDCIQSDNTTNPRVVSLNISFSELRGQIDPAFSNLTSIRKLDLSGNTLTGEIPAFLANLPNLTELNVEGNKLTGIVPQRLHERSKNGSLSLRFGRNPDLCLSDSCSNTKKKNKNGYIIPLVVVGIIVVLLTALALFRRFKKKQQRGTLGERNGPLKTAKRYFKYSEVVNITNNFERVIGKGGFGKVYHGVINGEQVAVKVLSEESAQGYKEFRAEVDLLMRVHHTNLTSLVGYCNEINHMVLIYEYMANENLGDYLAGKRSFILSWEERLKISLDAAQGLEYLHNGCKPPIVHRDVKPTNILLNEKLQAKMADFGLSRSFSVEGSGQISTVVAGSIGYLDPEYYSTRQMNEKSDVYSLGVVLLEVITGQPAIASSKTEKVHISDHVRSILANGDIRGIVDQRLRERYDVGSAWKMSEIALACTEHTSAQRPTMSQVVMELKQIVYGIVTDQENYDDSTKMLTVNLDTEMVPRAR.

A signal peptide spans 1–24 (MAMLKSLSSILFTSFALLFFLVHA). Topologically, residues 25–517 (QDQSGFISID…SNTKKKNKNG (493 aa)) are extracellular. LRR repeat units follow at residues 415 to 438 (RVVS…SNLT), 439 to 462 (SIRK…ANLP), and 463 to 483 (NLTE…QRLH). Residues 518–538 (YIIPLVVVGIIVVLLTALALF) form a helical membrane-spanning segment. The Cytoplasmic portion of the chain corresponds to 539 to 876 (RRFKKKQQRG…LDTEMVPRAR (338 aa)). Positions 574–847 (NNFERVIGKG…VVMELKQIVY (274 aa)) constitute a Protein kinase domain. Residues 580–588 (IGKGGFGKV) and K601 contribute to the ATP site. Position 646 is a phosphotyrosine (Y646). D697 serves as the catalytic Proton acceptor. Residue S731 is modified to Phosphoserine. The residue at position 732 (T732) is a Phosphothreonine. Y745 bears the Phosphotyrosine mark.

The protein belongs to the protein kinase superfamily. Ser/Thr protein kinase family.

Its subcellular location is the membrane. In terms of biological role, involved in innate immune response of plants. The protein is Senescence-induced receptor-like serine/threonine-protein kinase (SIRK) of Arabidopsis thaliana (Mouse-ear cress).